The chain runs to 157 residues: Cysteine protease Nivulian-2 (157 aa).

Belongs to the intron maturase 2 family. MatK subfamily. Monomer. Glycosylated. Accumulates in latex (at protein level).

With respect to regulation, inhibited by HgCl(2), iodoacetamide (IAA) and, to a far lesser extent, by SDS, hydrogen peroxide H(1)O(2), KCl, NaCl, ZnCl(2), AgSO(4), CdCl(2), FeCl(3), PMSF, Pepstatin A and EDTA. Repressed moderately by many organic solvents such as diethyl ether, ethy lacetate, acetophenone, butanol, trichloroethylene, tetrahydrofuran, methanol, chloroform and dichloromethane, and, to a lesser extent, by propanol, benzyl alcohol and chlorobenzene. Cysteine protease inducing milk clotting by cleaving casein. Exhibits biomedical activities such as wound healing, haemostatic and antibacterial activity, as well as agricultural application in biocontrol process against the infectious management of the root knot nematode Meloidogyne incognita. The protein is Cysteine protease Nivulian-2 of Euphorbia nivulia (Leafy milk hedge).